We begin with the raw amino-acid sequence, 166 residues long: Large ribosomal subunit protein mL41 (166 aa).

The N-terminal 26 residues, 1–26 (MNNCIKVVPIALRCQQRTISTSSVLE), are a transit peptide targeting the mitochondrion. The interval 136 to 166 (KDGSAKEPSVNEQLTPEEALQRARKTGSDIF) is disordered.

This sequence belongs to the mitochondrion-specific ribosomal protein mL41 family. In terms of assembly, component of the mitochondrial ribosome large subunit (39S) which comprises a 16S rRNA and about 50 distinct proteins.

The protein localises to the mitochondrion. This Drosophila melanogaster (Fruit fly) protein is Large ribosomal subunit protein mL41 (mRpL41).